An 82-amino-acid polypeptide reads, in one-letter code: Small ribosomal subunit protein bS16 (82 aa).

This sequence belongs to the bacterial ribosomal protein bS16 family.

This chain is Small ribosomal subunit protein bS16, found in Vibrio atlanticus (strain LGP32) (Vibrio splendidus (strain Mel32)).